Reading from the N-terminus, the 317-residue chain is Acetyl-coenzyme A carboxylase carboxyl transferase subunit alpha (317 aa).

One can recognise a CoA carboxyltransferase C-terminal domain in the interval K37 to D291.

This sequence belongs to the AccA family. Acetyl-CoA carboxylase is a heterohexamer composed of biotin carboxyl carrier protein (AccB), biotin carboxylase (AccC) and two subunits each of ACCase subunit alpha (AccA) and ACCase subunit beta (AccD).

It is found in the cytoplasm. It catalyses the reaction N(6)-carboxybiotinyl-L-lysyl-[protein] + acetyl-CoA = N(6)-biotinyl-L-lysyl-[protein] + malonyl-CoA. The protein operates within lipid metabolism; malonyl-CoA biosynthesis; malonyl-CoA from acetyl-CoA: step 1/1. Component of the acetyl coenzyme A carboxylase (ACC) complex. First, biotin carboxylase catalyzes the carboxylation of biotin on its carrier protein (BCCP) and then the CO(2) group is transferred by the carboxyltransferase to acetyl-CoA to form malonyl-CoA. The protein is Acetyl-coenzyme A carboxylase carboxyl transferase subunit alpha of Rhodospirillum centenum (strain ATCC 51521 / SW).